A 193-amino-acid polypeptide reads, in one-letter code: Ion-translocating oxidoreductase complex subunit A (193 aa).

The next 6 membrane-spanning stretches (helical) occupy residues 5–25, 39–59, 63–83, 102–122, 134–154, and 171–191; these read VLLL…FLGL, IGMS…SYLV, ILIP…VIAV, LLGI…VALL, AVYG…FAAL, and SIAL…TGLV.

Belongs to the NqrDE/RnfAE family. In terms of assembly, the complex is composed of six subunits: RnfA, RnfB, RnfC, RnfD, RnfE and RnfG.

It localises to the cell inner membrane. Part of a membrane-bound complex that couples electron transfer with translocation of ions across the membrane. This Pseudoalteromonas translucida (strain TAC 125) protein is Ion-translocating oxidoreductase complex subunit A.